Consider the following 171-residue polypeptide: Peptide deformylase (171 aa).

Positions 91 and 133 each coordinate Fe cation. The active site involves E134. Position 137 (H137) interacts with Fe cation.

Belongs to the polypeptide deformylase family. Fe(2+) is required as a cofactor.

The catalysed reaction is N-terminal N-formyl-L-methionyl-[peptide] + H2O = N-terminal L-methionyl-[peptide] + formate. Its function is as follows. Removes the formyl group from the N-terminal Met of newly synthesized proteins. Requires at least a dipeptide for an efficient rate of reaction. N-terminal L-methionine is a prerequisite for activity but the enzyme has broad specificity at other positions. This chain is Peptide deformylase, found in Haemophilus ducreyi (strain 35000HP / ATCC 700724).